The sequence spans 109 residues: Parvalbumin beta-1 (109 aa).

Ser2 carries the N-acetylserine modification. EF-hand domains are found at residues 39–74 and 78–109; these read KSHEEVKKAFFVIDQDQSGFIEEDELKLFLQTFGAG and LTAAETKAFLAAGDEDGDGMIGVDEFVTLVKA. 11 residues coordinate Ca(2+): Asp52, Asp54, Ser56, Phe58, Glu60, Glu63, Asp91, Asp93, Asp95, Met97, and Glu102.

The protein belongs to the parvalbumin family.

In muscle, parvalbumin is thought to be involved in relaxation after contraction. It binds two calcium ions. This Gadus chalcogrammus (Alaska pollock) protein is Parvalbumin beta-1.